Reading from the N-terminus, the 956-residue chain is Valine--tRNA ligase (956 aa).

The short motif at 69-79 (PNITGVLHMGH) is the 'HIGH' region element. Residues 566–570 (KMSKS) carry the 'KMSKS' region motif. Lys-569 provides a ligand contact to ATP. The stretch at 885–911 (LCARLQKAWQKARQKVQQVERKLADAQ) forms a coiled coil.

This sequence belongs to the class-I aminoacyl-tRNA synthetase family. ValS type 1 subfamily. In terms of assembly, monomer.

The protein localises to the cytoplasm. The enzyme catalyses tRNA(Val) + L-valine + ATP = L-valyl-tRNA(Val) + AMP + diphosphate. Functionally, catalyzes the attachment of valine to tRNA(Val). As ValRS can inadvertently accommodate and process structurally similar amino acids such as threonine, to avoid such errors, it has a 'posttransfer' editing activity that hydrolyzes mischarged Thr-tRNA(Val) in a tRNA-dependent manner. The protein is Valine--tRNA ligase of Treponema pallidum (strain Nichols).